Consider the following 327-residue polypeptide: Transaldolase (327 aa).

The active-site Schiff-base intermediate with substrate is the Lys-132.

Belongs to the transaldolase family. Type 1 subfamily. Homodimer.

It localises to the cytoplasm. The catalysed reaction is D-sedoheptulose 7-phosphate + D-glyceraldehyde 3-phosphate = D-erythrose 4-phosphate + beta-D-fructose 6-phosphate. It functions in the pathway carbohydrate degradation; pentose phosphate pathway; D-glyceraldehyde 3-phosphate and beta-D-fructose 6-phosphate from D-ribose 5-phosphate and D-xylulose 5-phosphate (non-oxidative stage): step 2/3. Functionally, transaldolase is important for the balance of metabolites in the pentose-phosphate pathway. The sequence is that of Transaldolase from Chlamydia felis (strain Fe/C-56) (Chlamydophila felis).